The chain runs to 154 residues: MGLSDGEWQLVLNIWGKVEADIPSHGQEVLISLFKGHPETLEKFDKFKHLKSEDEMKASEELKKHGVTVLTALGGILKKKGQHEAELKPLAQSHATKHKIPVKYLEFISDAIIHALQKKHPGDFGADAQGAMKKALELFRNDMAAKYKELGFQG.

The 147-residue stretch at 2–148 (GLSDGEWQLV…FRNDMAAKYK (147 aa)) folds into the Globin domain. Ser4 carries the phosphoserine modification. His65 is a nitrite binding site. O2 is bound at residue His65. Thr68 is subject to Phosphothreonine. Position 94 (His94) interacts with heme b.

This sequence belongs to the globin family. Monomeric.

The protein resides in the cytoplasm. It is found in the sarcoplasm. The catalysed reaction is Fe(III)-heme b-[protein] + nitric oxide + H2O = Fe(II)-heme b-[protein] + nitrite + 2 H(+). It carries out the reaction H2O2 + AH2 = A + 2 H2O. Functionally, monomeric heme protein which primary function is to store oxygen and facilitate its diffusion within muscle tissues. Reversibly binds oxygen through a pentacoordinated heme iron and enables its timely and efficient release as needed during periods of heightened demand. Depending on the oxidative conditions of tissues and cells, and in addition to its ability to bind oxygen, it also has a nitrite reductase activity whereby it regulates the production of bioactive nitric oxide. Under stress conditions, like hypoxia and anoxia, it also protects cells against reactive oxygen species thanks to its pseudoperoxidase activity. The chain is Myoglobin (MB) from Lagothrix lagotricha (Brown woolly monkey).